Here is a 337-residue protein sequence, read N- to C-terminus: Large ribosomal subunit protein uL3 (337 aa).

A disordered region spans residues 1–20 (MASIHRPKRGSLAFSPRKRA).

This sequence belongs to the universal ribosomal protein uL3 family. As to quaternary structure, part of the 50S ribosomal subunit. Forms a cluster with proteins L14 and L24e.

Its function is as follows. One of the primary rRNA binding proteins, it binds directly near the 3'-end of the 23S rRNA, where it nucleates assembly of the 50S subunit. In Methanosarcina barkeri (strain Fusaro / DSM 804), this protein is Large ribosomal subunit protein uL3.